Consider the following 29-residue polypeptide: Cyclotide cter-N (29 aa).

The cyclopeptide (Gly-Asn) cross-link spans 1–29; sequence GSAFCGETCVLGTCYTPDCSCTALVCLKN. Disulfide bonds link Cys5–Cys19, Cys9–Cys21, and Cys14–Cys26.

This is a cyclic peptide.

The protein resides in the secreted. Its function is as follows. Probably participates in a plant defense mechanism. The chain is Cyclotide cter-N from Clitoria ternatea (Butterfly pea).